We begin with the raw amino-acid sequence, 791 residues long: 1-phosphatidylinositol 4,5-bisphosphate phosphodiesterase delta-4 (791 aa).

Residues 16 to 124 enclose the PH domain; that stretch reads LLMQKGTMMR…WMQGLQLLVG (109 aa). The segment at 26–53 is substrate binding; that stretch reads KVRSKSWKKLRFFRLQDDGMTVWHARQA. 3 consecutive EF-hand domains span residues 134–169, 170–205, and 207–237; these read RLDQWLSDWFQRGDKNQDGRMSFGEVQRLLHLMNVE, MDQEYAFQLFQTADTSQSGTLEGEEFVEFYKSLTQR, and EVQELFEKFSSDGQKLTLLEFVDFLQEEQKE. Ca(2+)-binding residues include Asp-147, Asn-149, Asp-151, Arg-153, Glu-158, Asp-183, Ser-185, Ser-187, Thr-189, and Glu-194. The GBA motif lies at 213–243; that stretch reads EKFSSDGQKLTLLEFVDFLQEEQKEGERASD. The PI-PLC X-box domain occupies 290–435; that stretch reads QDMTQPLNHY…LRGKILVKGK (146 aa). His-305 is an active-site residue. Ca(2+) contacts are provided by Asn-306, Glu-335, and Asp-337. His-350 is an active-site residue. Residue Glu-384 participates in Ca(2+) binding. Residues Lys-433, Lys-435, Ser-551, and Arg-578 each coordinate substrate. The region spanning 522–638 is the PI-PLC Y-box domain; the sequence is LSALVVYLKA…GYVLKPDFLR (117 aa). Residues 638 to 765 enclose the C2 domain; the sequence is RDAQSSFHPE…QGYRHIHLLS (128 aa). Ca(2+) is bound by residues Ile-679, Asp-681, Asn-705, Asp-734, Tyr-735, and Asp-736. The PDZ-binding motif lies at 760-763; that stretch reads HIHL.

Interacts with GRIP1. Interacts (via GBA motif) with guanine nucleotide-binding protein G(i) alpha subunit GNAI3 (inactive GDP-bound form); low-affinity interaction. Requires Ca(2+) as cofactor.

The protein resides in the membrane. It localises to the nucleus. It is found in the cytoplasm. Its subcellular location is the endoplasmic reticulum. It carries out the reaction a 1,2-diacyl-sn-glycero-3-phospho-(1D-myo-inositol-4,5-bisphosphate) + H2O = 1D-myo-inositol 1,4,5-trisphosphate + a 1,2-diacyl-sn-glycerol + H(+). The catalysed reaction is a 1,2-diacyl-sn-glycero-3-phospho-(1D-myo-inositol) + H2O = 1D-myo-inositol 1-phosphate + a 1,2-diacyl-sn-glycerol + H(+). Its function is as follows. Hydrolyzes the phosphatidylinositol 4,5-bisphosphate (PIP2) to generate 2 second messenger molecules diacylglycerol (DAG) and inositol 1,4,5-trisphosphate (IP3). DAG mediates the activation of protein kinase C (PKC), while IP3 releases Ca(2+) from intracellular stores. Required for acrosome reaction in sperm during fertilization, probably by acting as an important enzyme for intracellular Ca(2+) mobilization in the zona pellucida-induced acrosome reaction. May play a role in cell growth. Modulates the liver regeneration in cooperation with nuclear PKC. Overexpression up-regulates the Erk signaling pathway and proliferation. In Bos taurus (Bovine), this protein is 1-phosphatidylinositol 4,5-bisphosphate phosphodiesterase delta-4 (PLCD4).